Consider the following 288-residue polypeptide: MTAIILDGRALAKTLREELRADTQAFIQNNGIAPSLAVVKIAGDPASDRYTRTIRKGCEEIGITFTDHTLPPETTQAMLEETISALSFDRTIHGILLHLPLPPGLDSARAIAQIDPAKDVDGVHPYNAGLLAMGRPGLIPNTPAGGMELLLRNNIPLKGQHATVVGRSVVVGKPMALLLLNEHATVTIAHSRTKDLAAVVRSADIVVAATGKPGLITGDMVKPGAVVVDFGVNVLEDGRVVGDVDFDSVVNVASAITPVPGGTGPVTNVMLLRNVLRAAQQQLASRHH.

NADP(+) is bound by residues 166 to 168, Ser191, and Val232; that span reads GRS.

The protein belongs to the tetrahydrofolate dehydrogenase/cyclohydrolase family. In terms of assembly, homodimer.

It catalyses the reaction (6R)-5,10-methylene-5,6,7,8-tetrahydrofolate + NADP(+) = (6R)-5,10-methenyltetrahydrofolate + NADPH. It carries out the reaction (6R)-5,10-methenyltetrahydrofolate + H2O = (6R)-10-formyltetrahydrofolate + H(+). The protein operates within one-carbon metabolism; tetrahydrofolate interconversion. Functionally, catalyzes the oxidation of 5,10-methylenetetrahydrofolate to 5,10-methenyltetrahydrofolate and then the hydrolysis of 5,10-methenyltetrahydrofolate to 10-formyltetrahydrofolate. This chain is Bifunctional protein FolD, found in Roseiflexus sp. (strain RS-1).